The sequence spans 452 residues: Gastrin/cholecystokinin type B receptor (452 aa).

The disordered stretch occupies residues 1–21 (MELLKLNRSVQGPGPGSGSSL). Residues 1 to 57 (MELLKLNRSVQGPGPGSGSSLCRPGVSLLNSSSAGNLSCDPPRIRGTGTRELEMAIR) lie on the Extracellular side of the membrane. Residues Asn7, Asn30, and Asn36 are each glycosylated (N-linked (GlcNAc...) asparagine). Residues 58 to 79 (ITLYAVIFLMSVGGNVLIIVVL) form a helical membrane-spanning segment. Over 80–87 (GLSRRLRT) the chain is Cytoplasmic. Residues 88-109 (VTNAFLLSLAVSDLLLAVACMP) traverse the membrane as a helical segment. Topologically, residues 110 to 131 (FTLLPNLMGTFIFGTVICKAIS) are extracellular. The cysteines at positions 127 and 205 are disulfide-linked. The chain crosses the membrane as a helical span at residues 132–150 (YLMGVSVSVSTLNLVAIAL). Residues 151–170 (ERYSAICRPLQARVWQTRSH) are Cytoplasmic-facing. Residues 171 to 189 (AARVILATWLLSGLLMVPY) form a helical membrane-spanning segment. At 190–219 (PVYTMVQPVGPRVLQCMHRWPSARVQQTWS) the chain is on the extracellular side. Residues 220–242 (VLLLLLLFFIPGVVIAVAYGLIS) traverse the membrane as a helical segment. At 243–338 (RELYLGLHFD…KLLAKKRVVR (96 aa)) the chain is on the cytoplasmic side. The disordered stretch occupies residues 257 to 286 (SETQSRARNQGGLPGGAAPGPVHQNGGCRP). The chain crosses the membrane as a helical span at residues 339-360 (MLLVIVLLFFLCWLPVYSVNTW). Residues 361–378 (RAFDGPGAQRALSGAPIS) lie on the Extracellular side of the membrane. Residues 379-399 (FIHLLSYVSACVNPLVYCFMH) traverse the membrane as a helical segment. Topologically, residues 400–452 (RRFRQACLDTCARCCPRPPRARPQPLPDEDPPTPSIASLSRLSYTTISTLGPG) are cytoplasmic. Cys413 carries the S-palmitoyl cysteine lipid modification. The interval 421 to 452 (RPQPLPDEDPPTPSIASLSRLSYTTISTLGPG) is disordered. Polar residues predominate over residues 434-452 (SIASLSRLSYTTISTLGPG).

It belongs to the G-protein coupled receptor 1 family. Parietal cells, pancreas, brain and various neoplastic tissues.

The protein resides in the cell membrane. Its function is as follows. Receptor for gastrin and cholecystokinin. The CCK-B receptors occur throughout the central nervous system where they modulate anxiety, analgesia, arousal, and neuroleptic activity. This receptor mediates its action by association with G proteins that activate a phosphatidylinositol-calcium second messenger system. This chain is Gastrin/cholecystokinin type B receptor (Cckbr), found in Rattus norvegicus (Rat).